The sequence spans 177 residues: ATP-dependent protease subunit HslV (177 aa).

Threonine 6 is a catalytic residue. Na(+)-binding residues include alanine 162, cysteine 165, and threonine 168.

Belongs to the peptidase T1B family. HslV subfamily. In terms of assembly, a double ring-shaped homohexamer of HslV is capped on each side by a ring-shaped HslU homohexamer. The assembly of the HslU/HslV complex is dependent on binding of ATP.

It is found in the cytoplasm. The enzyme catalyses ATP-dependent cleavage of peptide bonds with broad specificity.. With respect to regulation, allosterically activated by HslU binding. Its function is as follows. Protease subunit of a proteasome-like degradation complex believed to be a general protein degrading machinery. The sequence is that of ATP-dependent protease subunit HslV from Lawsonia intracellularis (strain PHE/MN1-00).